Consider the following 139-residue polypeptide: Histone H2B (139 aa).

The span at 1-37 (MAPKSVASKAPASQASKAPAAASKAPAKAAKTSAAPK) shows a compositional bias: low complexity. The segment at 1–48 (MAPKSVASKAPASQASKAPAAASKAPAKAAKTSAAPKDGAKKRSKKRV) is disordered. Lysine 9 is modified (N6-acetyllysine; alternate). Lysine 9 is covalently cross-linked (Glycyl lysine isopeptide (Lys-Gly) (interchain with G-Cter in SUMO); alternate). Residue serine 13 is modified to Phosphoserine. Position 17 is an N6-acetyllysine (lysine 17). A Glycyl lysine isopeptide (Lys-Gly) (interchain with G-Cter in ubiquitin) cross-link involves residue lysine 134.

The protein belongs to the histone H2B family. The nucleosome is a histone octamer containing two molecules each of H2A, H2B, H3 and H4 assembled in one H3-H4 heterotetramer and two H2A-H2B heterodimers. The octamer wraps approximately 147 bp of DNA. In terms of processing, monoubiquitinated by the UBC2-BRE1 complex to form H2BK123ub1. H2BK123ub1 gives a specific tag for epigenetic transcriptional activation and is also prerequisite for H3K4me and H3K79me formation. H2BK123ub1 also modulates the formation of double-strand breaks during meiosis and is a prerequisite for DNA-damage checkpoint activation. Post-translationally, phosphorylated to form H2BS10ph during progression through meiotic prophase. May be correlated with chromosome condensation. Acetylation of N-terminal lysines and particularly formation of H2BK11ac has a positive effect on transcription. In terms of processing, sumoylation to form H2BK6su occurs preferentially near the telomeres and represses gene transcription.

Its subcellular location is the nucleus. It localises to the chromosome. Functionally, core component of nucleosome. Nucleosomes wrap and compact DNA into chromatin, limiting DNA accessibility to the cellular machineries which require DNA as a template. Histones thereby play a central role in transcription regulation, DNA repair, DNA replication and chromosomal stability. DNA accessibility is regulated via a complex set of post-translational modifications of histones, also called histone code, and nucleosome remodeling. The protein is Histone H2B (HTB1) of Cryptococcus neoformans var. neoformans serotype D (strain B-3501A) (Filobasidiella neoformans).